A 117-amino-acid polypeptide reads, in one-letter code: Large ribosomal subunit protein uL22 (117 aa).

It belongs to the universal ribosomal protein uL22 family. In terms of assembly, part of the 50S ribosomal subunit.

Its function is as follows. This protein binds specifically to 23S rRNA; its binding is stimulated by other ribosomal proteins, e.g. L4, L17, and L20. It is important during the early stages of 50S assembly. It makes multiple contacts with different domains of the 23S rRNA in the assembled 50S subunit and ribosome. Functionally, the globular domain of the protein is located near the polypeptide exit tunnel on the outside of the subunit, while an extended beta-hairpin is found that lines the wall of the exit tunnel in the center of the 70S ribosome. The protein is Large ribosomal subunit protein uL22 of Lactobacillus gasseri (strain ATCC 33323 / DSM 20243 / BCRC 14619 / CIP 102991 / JCM 1131 / KCTC 3163 / NCIMB 11718 / NCTC 13722 / AM63).